We begin with the raw amino-acid sequence, 567 residues long: TGF-beta receptor type-2 (567 aa).

The signal sequence occupies residues 1-23; it reads MGRGLLRGLWPLHIVLWTRIAST. Topologically, residues 24–166 are extracellular; sequence IPPHVPKSVN…SPDLLLVIIQ (143 aa). Disulfide bonds link C51–C84, C54–C71, C61–C67, C77–C101, C121–C136, and C138–C143. 2 N-linked (GlcNAc...) asparagine glycosylation sites follow: N70 and N94. The chain crosses the membrane as a helical span at residues 167–187; sequence VTGVSLLPPLGIAIAVIIIFY. The Cytoplasmic segment spans residues 188 to 567; the sequence is CYRVHRQQKL…PEDGSLNTTK (380 aa). The Protein kinase domain occupies 244–546; the sequence is IELDTLVGKG…RFSELEHPER (303 aa). Residues 250-258 and K277 contribute to the ATP site; that span reads VGKGRFAEV. Catalysis depends on D379, which acts as the Proton acceptor. Phosphoserine occurs at positions 409, 548, and 553. Residues 545-567 form a disordered region; that stretch reads ERLSGRSCSQEKIPEDGSLNTTK.

The protein belongs to the protein kinase superfamily. TKL Ser/Thr protein kinase family. TGFB receptor subfamily. Homodimer. Heterohexamer; TGFB1, TGFB2 and TGFB3 homodimeric ligands assemble a functional receptor composed of two TGFBR1 and TGFBR2 heterodimers to form a ligand-receptor heterohexamer. The respective affinity of TGFRB1 and TGFRB2 for the ligands may modulate the kinetics of assembly of the receptor and may explain the different biological activities of TGFB1, TGFB2 and TGFB3. Component of a complex composed of TSC22D1 (via N-terminus), TGFBR1 and TGFBR2; the interaction between TSC22D1 and TGFBR1 is inhibited by SMAD7 and promoted by TGFB1. Interacts with DAXX. Interacts with DYNLT4. Interacts with ZFYVE9; ZFYVE9 recruits SMAD2 and SMAD3 to the TGF-beta receptor. Interacts with and is activated by SCUBE3; this interaction does not affect TGFB1-binding to TGFBR2. Interacts with VPS39; this interaction is independent of the receptor kinase activity and of the presence of TGF-beta. Interacts with CLU. Mg(2+) is required as a cofactor. It depends on Mn(2+) as a cofactor. Phosphorylated on a Ser/Thr residue in the cytoplasmic domain. As to expression, widely expressed in adult. Expressed primarily in mesenchyme and epidermis of the midgestational fetus.

The protein localises to the cell membrane. Its subcellular location is the membrane raft. It catalyses the reaction L-threonyl-[receptor-protein] + ATP = O-phospho-L-threonyl-[receptor-protein] + ADP + H(+). The enzyme catalyses L-seryl-[receptor-protein] + ATP = O-phospho-L-seryl-[receptor-protein] + ADP + H(+). Its function is as follows. Transmembrane serine/threonine kinase forming with the TGF-beta type I serine/threonine kinase receptor, TGFBR1, the non-promiscuous receptor for the TGF-beta cytokines TGFB1, TGFB2 and TGFB3. Transduces the TGFB1, TGFB2 and TGFB3 signal from the cell surface to the cytoplasm and is thus regulating a plethora of physiological and pathological processes including cell cycle arrest in epithelial and hematopoietic cells, control of mesenchymal cell proliferation and differentiation, wound healing, extracellular matrix production, immunosuppression and carcinogenesis. The formation of the receptor complex composed of 2 TGFBR1 and 2 TGFBR2 molecules symmetrically bound to the cytokine dimer results in the phosphorylation and the activation of TGFRB1 by the constitutively active TGFBR2. Activated TGFBR1 phosphorylates SMAD2 which dissociates from the receptor and interacts with SMAD4. The SMAD2-SMAD4 complex is subsequently translocated to the nucleus where it modulates the transcription of the TGF-beta-regulated genes. This constitutes the canonical SMAD-dependent TGF-beta signaling cascade. Also involved in non-canonical, SMAD-independent TGF-beta signaling pathways. Functionally, has transforming growth factor beta-activated receptor activity. This Mus musculus (Mouse) protein is TGF-beta receptor type-2 (Tgfbr2).